Reading from the N-terminus, the 371-residue chain is Cytochrome b (371 aa).

4 helical membrane-spanning segments follow: residues 25-45 (FGSM…FLAV), 69-90 (WIMQ…YIHI), 105-125 (WLSG…GYVL), and 170-190 (FFAL…IHII). Heme b contacts are provided by histidine 75 and histidine 89. Heme b-binding residues include histidine 174 and histidine 188. Histidine 193 contributes to the a ubiquinone binding site. The next 4 membrane-spanning stretches (helical) occupy residues 218–238 (YKDM…LSFM), 280–300 (LGGT…PFTH), 312–332 (LTQA…WTAT), and 339–358 (FTLI…IINP).

This sequence belongs to the cytochrome b family. As to quaternary structure, the cytochrome bc1 complex contains 3 respiratory subunits (MT-CYB, CYC1 and UQCRFS1), 2 core proteins (UQCRC1 and UQCRC2) and probably 6 low-molecular weight proteins. Requires heme b as cofactor.

Its subcellular location is the mitochondrion inner membrane. In terms of biological role, component of the ubiquinol-cytochrome c reductase complex (complex III or cytochrome b-c1 complex) that is part of the mitochondrial respiratory chain. The b-c1 complex mediates electron transfer from ubiquinol to cytochrome c. Contributes to the generation of a proton gradient across the mitochondrial membrane that is then used for ATP synthesis. This chain is Cytochrome b (MT-CYB), found in Toxicocalamus preussi (Preuss's forest snake).